A 94-amino-acid polypeptide reads, in one-letter code: Sec-independent protein translocase protein TatA (94 aa).

A helical membrane pass occupies residues 1–21 (MFGRLGAPEIILILVVIILLF). The segment at 44-94 (AKAMKSEGQESTPAGPPNTDEQPPAQRTIQAAPGDVTSSRPVSEPTDTTKR) is disordered. Over residues 62 to 72 (TDEQPPAQRTI) the composition is skewed to polar residues.

It belongs to the TatA/E family. As to quaternary structure, the Tat system comprises two distinct complexes: a TatABC complex, containing multiple copies of TatA, TatB and TatC subunits, and a separate TatA complex, containing only TatA subunits. Substrates initially bind to the TatABC complex, which probably triggers association of the separate TatA complex to form the active translocon.

The protein resides in the cell membrane. In terms of biological role, part of the twin-arginine translocation (Tat) system that transports large folded proteins containing a characteristic twin-arginine motif in their signal peptide across membranes. TatA could form the protein-conducting channel of the Tat system. This chain is Sec-independent protein translocase protein TatA, found in Streptomyces avermitilis (strain ATCC 31267 / DSM 46492 / JCM 5070 / NBRC 14893 / NCIMB 12804 / NRRL 8165 / MA-4680).